The sequence spans 121 residues: Large ribosomal subunit protein uL3 (121 aa).

An N5-methylglutamine modification is found at Gln62.

Belongs to the universal ribosomal protein uL3 family. As to quaternary structure, part of the 50S ribosomal subunit. Forms a cluster with proteins L14 and L19. Methylated by PrmB.

One of the primary rRNA binding proteins, it binds directly near the 3'-end of the 23S rRNA, where it nucleates assembly of the 50S subunit. The protein is Large ribosomal subunit protein uL3 (rplC) of Aggregatibacter actinomycetemcomitans (Actinobacillus actinomycetemcomitans).